Reading from the N-terminus, the 316-residue chain is Sulfate adenylyltransferase subunit 2 (316 aa).

Positions 297-316 are disordered; the sequence is RAIDRDQSGSMEKKKREGYF.

Belongs to the PAPS reductase family. CysD subfamily. In terms of assembly, heterodimer composed of CysD, the smaller subunit, and CysN.

It catalyses the reaction sulfate + ATP + H(+) = adenosine 5'-phosphosulfate + diphosphate. It functions in the pathway sulfur metabolism; hydrogen sulfide biosynthesis; sulfite from sulfate: step 1/3. Functionally, with CysN forms the ATP sulfurylase (ATPS) that catalyzes the adenylation of sulfate producing adenosine 5'-phosphosulfate (APS) and diphosphate, the first enzymatic step in sulfur assimilation pathway. APS synthesis involves the formation of a high-energy phosphoric-sulfuric acid anhydride bond driven by GTP hydrolysis by CysN coupled to ATP hydrolysis by CysD. The chain is Sulfate adenylyltransferase subunit 2 from Allorhizobium ampelinum (strain ATCC BAA-846 / DSM 112012 / S4) (Agrobacterium vitis (strain S4)).